Reading from the N-terminus, the 400-residue chain is Acetate kinase (400 aa).

Asn8 provides a ligand contact to Mg(2+). Lys15 lines the ATP pocket. Arg89 serves as a coordination point for substrate. The active-site Proton donor/acceptor is Asp146. Residues 206 to 210 (HVGNG), 283 to 285 (DMR), and 331 to 335 (GMGEN) contribute to the ATP site. Glu383 lines the Mg(2+) pocket.

This sequence belongs to the acetokinase family. Homodimer. The cofactor is Mg(2+). Mn(2+) is required as a cofactor.

The protein resides in the cytoplasm. The enzyme catalyses acetate + ATP = acetyl phosphate + ADP. Its pathway is metabolic intermediate biosynthesis; acetyl-CoA biosynthesis; acetyl-CoA from acetate: step 1/2. Its function is as follows. Catalyzes the formation of acetyl phosphate from acetate and ATP. Can also catalyze the reverse reaction. In Streptococcus equi subsp. zooepidemicus (strain MGCS10565), this protein is Acetate kinase.